The sequence spans 729 residues: Elongation factor 2 (729 aa).

Residues 19 to 262 (EQIRNIAIAA…MVCEHFPNPV (244 aa)) enclose the tr-type G domain. Residues 28–35 (AHVDHGKT), 94–98 (DTPGH), and 148–151 (NKVD) contribute to the GTP site. H597 is modified (diphthamide).

This sequence belongs to the TRAFAC class translation factor GTPase superfamily. Classic translation factor GTPase family. EF-G/EF-2 subfamily.

It localises to the cytoplasm. Functionally, catalyzes the GTP-dependent ribosomal translocation step during translation elongation. During this step, the ribosome changes from the pre-translocational (PRE) to the post-translocational (POST) state as the newly formed A-site-bound peptidyl-tRNA and P-site-bound deacylated tRNA move to the P and E sites, respectively. Catalyzes the coordinated movement of the two tRNA molecules, the mRNA and conformational changes in the ribosome. In Natronomonas pharaonis (strain ATCC 35678 / DSM 2160 / CIP 103997 / JCM 8858 / NBRC 14720 / NCIMB 2260 / Gabara) (Halobacterium pharaonis), this protein is Elongation factor 2.